The primary structure comprises 348 residues: UDP-rhamnose/UDP-galactose transporter 2 (348 aa).

10 consecutive transmembrane segments (helical) span residues 12 to 32 (AVSDVGAWAMNVTSSVGIIMA), 44 to 64 (FSFATTLTGFHFALTALVGMV), 81 to 101 (LLWFSLVANISIAAMNFSLML), 104 to 124 (VGFYQISKLSMIPVVCVMEWV), 133 to 153 (EVKASVMVVVVGVGICTVTDV), 160 to 180 (FICACTAVFSTSLQQISIGSL), 196 to 216 (APIQAISLLIFGPFVDYFLSG), 230 to 250 (LCILLSCALAVFCNISQYLCI), 257 to 277 (SFQVLGHMKTVCVLTLGWLIF), and 286 to 306 (IAGMVLAVVGMVIYSWAVELE).

Belongs to the TPT transporter family. TPT (TC 2.A.7.9) subfamily.

Its subcellular location is the golgi apparatus membrane. In terms of biological role, nucleotide-sugar transporter that transports UDP-rhamnose or UDP-galactose and UMP in a strict counter-exchange mode. The protein is UDP-rhamnose/UDP-galactose transporter 2 of Arabidopsis thaliana (Mouse-ear cress).